We begin with the raw amino-acid sequence, 293 residues long: ATP synthase gamma chain (293 aa).

The protein belongs to the ATPase gamma chain family. In terms of assembly, F-type ATPases have 2 components, CF(1) - the catalytic core - and CF(0) - the membrane proton channel. CF(1) has five subunits: alpha(3), beta(3), gamma(1), delta(1), epsilon(1). CF(0) has three main subunits: a, b and c.

The protein resides in the cell membrane. Its function is as follows. Produces ATP from ADP in the presence of a proton gradient across the membrane. The gamma chain is believed to be important in regulating ATPase activity and the flow of protons through the CF(0) complex. This chain is ATP synthase gamma chain, found in Streptococcus agalactiae serotype III (strain NEM316).